A 283-amino-acid chain; its full sequence is Gap junction beta-1 protein (283 aa).

Residues Met1 to Arg22 lie on the Cytoplasmic side of the membrane. The helical transmembrane segment at Val23–Gly45 threads the bilayer. Residues Asp46–Arg75 lie on the Extracellular side of the membrane. A helical membrane pass occupies residues Leu76 to Val95. The Cytoplasmic portion of the chain corresponds to Ala96–Thr130. A helical transmembrane segment spans residues Leu131–Phe153. The Extracellular segment spans residues Tyr154–Thr191. Residues Val192–Ile214 traverse the membrane as a helical segment. Topologically, residues Arg215–Cys283 are cytoplasmic. Residues Ser233, Ser258, Ser266, and Ser277 each carry the phosphoserine modification.

Belongs to the connexin family. Beta-type (group I) subfamily. As to quaternary structure, a connexon is composed of a hexamer of connexins. Interacts with CNST.

Its subcellular location is the cell membrane. It localises to the cell junction. The protein resides in the gap junction. In terms of biological role, one gap junction consists of a cluster of closely packed pairs of transmembrane channels, the connexons, through which materials of low MW diffuse from one cell to a neighboring cell. The chain is Gap junction beta-1 protein (GJB1) from Homo sapiens (Human).